Reading from the N-terminus, the 483-residue chain is Galactose-3-O-sulfotransferase 4 (483 aa).

Topologically, residues 1-18 (MGVLSPTRTMRLWGPRSL) are cytoplasmic. The chain crosses the membrane as a helical; Signal-anchor for type II membrane protein span at residues 19–39 (GVALGVFMTIGFALQLLGGPF). At 40–483 (QRRLPGLQLR…PLKTSRRPSP (444 aa)) the chain is on the lumenal side. Positions 225–248 (KRGNPHVSRDPNPPQLPSGAGPPA) are disordered. N-linked (GlcNAc...) asparagine glycosylation occurs at asparagine 371.

The protein belongs to the galactose-3-O-sulfotransferase family. It depends on Mn(2+) as a cofactor.

It is found in the golgi apparatus. The protein localises to the golgi stack membrane. Its pathway is protein modification; carbohydrate sulfation. In terms of biological role, catalyzes the transfer of sulfate to beta-1,3-linked galactose residues in O-linked glycoproteins. Good substrates include asialofetuin, Gal-beta-1,3-GalNAc and Gal-beta-1,3 (GlcNAc-beta-1,6)GalNAc. The protein is Galactose-3-O-sulfotransferase 4 (GAL3ST4) of Bos taurus (Bovine).